We begin with the raw amino-acid sequence, 104 residues long: L-rhamnose mutarotase (104 aa).

Tyr-18 is a substrate binding site. His-22 acts as the Proton donor in catalysis. Substrate contacts are provided by residues Tyr-41 and 76-77 (WW).

It belongs to the rhamnose mutarotase family. In terms of assembly, homodimer.

Its subcellular location is the cytoplasm. The enzyme catalyses alpha-L-rhamnose = beta-L-rhamnose. It participates in carbohydrate metabolism; L-rhamnose metabolism. In terms of biological role, involved in the anomeric conversion of L-rhamnose. The chain is L-rhamnose mutarotase from Yersinia pseudotuberculosis serotype O:1b (strain IP 31758).